Here is a 189-residue protein sequence, read N- to C-terminus: MAIKDAIEKIVSYFDADEVTDHEDVAKERPVKVQKTEQTPSQQQRKPERPQETVPPRRQHIKSDVQETQVLRSLSLSRSQVNQGSQQMNTTKTTIAIKYPKKYEDAQEIVELLIENECVLIDFQYMLEAQARRCLDFIDGASKVLTGNLQKVGSSMYLLTPINVVVDIEEIGLSHGNQESTFDFDMKRR.

The interval 18–64 (EVTDHEDVAKERPVKVQKTEQTPSQQQRKPERPQETVPPRRQHIKSD) is disordered. The span at 22 to 35 (HEDVAKERPVKVQK) shows a compositional bias: basic and acidic residues.

This sequence belongs to the SepF family. Homodimer. Interacts with FtsZ.

The protein resides in the cytoplasm. Functionally, cell division protein that is part of the divisome complex and is recruited early to the Z-ring. Probably stimulates Z-ring formation, perhaps through the cross-linking of FtsZ protofilaments. Its function overlaps with FtsA. The chain is Cell division protein SepF from Streptococcus thermophilus (strain ATCC BAA-250 / LMG 18311).